Reading from the N-terminus, the 357-residue chain is Peptide chain release factor 1 (357 aa).

Gln234 is modified (N5-methylglutamine).

The protein belongs to the prokaryotic/mitochondrial release factor family. Methylated by PrmC. Methylation increases the termination efficiency of RF1.

Its subcellular location is the cytoplasm. Peptide chain release factor 1 directs the termination of translation in response to the peptide chain termination codons UAG and UAA. In Lactococcus lactis subsp. cremoris (strain MG1363), this protein is Peptide chain release factor 1.